The following is a 607-amino-acid chain: Threonine--tRNA ligase (607 aa).

Positions 200 to 502 are catalytic; it reads DHRKLGRELG…LIEEYAGDFP (303 aa). The Zn(2+) site is built by cysteine 299, histidine 350, and histidine 479.

This sequence belongs to the class-II aminoacyl-tRNA synthetase family. Homodimer. Zn(2+) serves as cofactor.

It is found in the cytoplasm. The catalysed reaction is tRNA(Thr) + L-threonine + ATP = L-threonyl-tRNA(Thr) + AMP + diphosphate + H(+). Its function is as follows. Catalyzes the attachment of threonine to tRNA(Thr) in a two-step reaction: L-threonine is first activated by ATP to form Thr-AMP and then transferred to the acceptor end of tRNA(Thr). Also edits incorrectly charged L-seryl-tRNA(Thr). The sequence is that of Threonine--tRNA ligase from Synechococcus sp. (strain ATCC 27144 / PCC 6301 / SAUG 1402/1) (Anacystis nidulans).